Reading from the N-terminus, the 507-residue chain is ATP-dependent RNA helicase DDX47 (507 aa).

A compositionally biased stretch (acidic residues) spans 1 to 31 (MSETSEDEQTQLQTSDEEEDLGSEEEQEDED). The interval 1–58 (MSETSEDEQTQLQTSDEEEDLGSEEEQEDEDNNHKEGDSEAALSGEDDKGSEDDAAEE) is disordered. Residues 61–89 (LTWKDLGLNEALCQACDELKWKAPSKIQR) carry the Q motif motif. Residues 92 to 263 (IPVALQGKDV…RASLKDPVKV (172 aa)) form the Helicase ATP-binding domain. 105–112 (AETGSGKT) lines the ATP pocket. The DEAD box motif lies at 211–214 (DEAD). The 145-residue stretch at 290 to 434 (YLVHILNELA…LYKCEEDEVM (145 aa)) folds into the Helicase C-terminal domain. Positions 426–453 (YKCEEDEVMALQERVAEAQRTAKLELKD) form a coiled coil. The segment covering 451–471 (LKDLEDTRGGHKRGGDTHDDS) has biased composition (basic and acidic residues). Residues 451 to 507 (LKDLEDTRGGHKRGGDTHDDSENFTGARKRMKPMGGTGGGGRKSFGKKNWSKGKQKR) are disordered. Over residues 494 to 507 (SFGKKNWSKGKQKR) the composition is skewed to basic residues.

Belongs to the DEAD box helicase family. DDX47/RRP3 subfamily.

Its subcellular location is the nucleus. The protein resides in the nucleolus. It carries out the reaction ATP + H2O = ADP + phosphate + H(+). Part of a translational control module, also containing ath/DHX33 and ais/DDX52, which coordinates germline stem cell differentiation with ribosome biogenesis during oogenesis. This module allows for coregulation of ribosomal proteins and non1/GTPBP4, a p53 repressor, preventing p53 stabilization, cell cycle arrest and loss of stem cell differentiation. With atos, adjusts transcription and translation of a subset of OXPHOS genes in macrophages to increase mitochondrial bioenergetics and allow tissue invasion. This chain is ATP-dependent RNA helicase DDX47, found in Drosophila melanogaster (Fruit fly).